The sequence spans 227 residues: Probable 2-phosphosulfolactate phosphatase (227 aa).

It belongs to the ComB family. It depends on Mg(2+) as a cofactor.

The enzyme catalyses (2R)-O-phospho-3-sulfolactate + H2O = (2R)-3-sulfolactate + phosphate. This is Probable 2-phosphosulfolactate phosphatase from Thermotoga petrophila (strain ATCC BAA-488 / DSM 13995 / JCM 10881 / RKU-1).